A 472-amino-acid chain; its full sequence is Putative ankyrin repeat protein L675 (472 aa).

8 ANK repeats span residues 125–156 (YKANRFYLGEKFDLGDVEVVKFFIKKGTDIHL), 187–216 (DNFKVLAKICRDGNLELLRLLELNGFNETI), 265–295 (YKTKVLLMAIANNHAELVQYLLTQNPSDKDI), 297–323 (HAMLYAVTTANASLLDYTLKNGGNIHY), 325–351 (NDQALILAVRFNHISMVRKLICLGMDS), 352–381 (NNVFALTMAAENNHQDIVQHLINRGADVNA), 382–411 (NNRSALIAAVKNGHLKIVQMFVNNGADIKI), and 413–440 (DTVIKTACKNGHNNIVKYLLGKGVSCDD).

The sequence is that of Putative ankyrin repeat protein L675 from Acanthamoeba polyphaga (Amoeba).